We begin with the raw amino-acid sequence, 1923 residues long: MGNSYAGQLKSARFEEALHNSIEASLRCSSVVPRPIFSQLYLDPDQHPFSSADVKPKVEDLDKDLVNRYTQNGSLDFSNNLTVNEMEDDEDDEEMSDSNSPPIPYSQKPAPEGSCTTDGFCQAGKDLRLVSLCMEQIDIPAGFLLVGAKSPNLPEHILVCAVDKRFLPDDHGKNALLGFSGNCIGCGERGFRYFTEFSNHINLKLTTQPKKQKHLKYYLVRSSQGVLSKGPLICWKECRSRQSSASCHSIKPSSSVSSTVTPENGTTNGYKSGFTQTDAANGNSSHGGKGSASSSTPAHTGNYSLSPRPSYASGDQATMFISGPPKKRHRGWYPGSPLPQPGLVVPVPTVRPLSRTEPLLSAPVPQTPLTGILQPRPIPAGETVIVPENLLSNSGVRPVILIGYGTLPYFYGNVGDIVVSPLLVNCYKIPQLENKDLEKLGLTGSQFLSVENMILLTIQYLVRLGPDQVPLREEFEQIMLKAMQEFTLRERALQIGAQCVPVSPGQLPWLARLIASVSQDLVHVVVTQNSLAEGISETLRTLSEMRHYQRLPDYVVVICASKIRGNEFCVVVLGQHQSRALAESMLTTSEFLKEISYELITGKVSFLASHFKTTSLGDDLDKLLEKMQQRRGDSVVTPFDGDLNECVSPQEAAAMIPTQNLDLDNETFHIYQPQLTVARKLLSQVCAIADSGSQSLDLGHFSKVDFIIIVPRSEVLVQQTLQRIRQSGVLVDLGLEENGTAHQRAEKYVVRLDNEIQTKFEVFMRRVKQNPYTLFVLVHDNSHVELTSVISGSLSHSEPSHGLADRVINCREVLEAFNLLVLQVSSFPYTLQTQQSRISSSNEVHWIQLDTGEDVGCEEKLYFGLSEYSKSLQWGITSPLLRCDETFEKMVNTLLERYPRLHSMVVRCYLLIQQYSEALMALTTMASLRDHSTPETLSIMDDLISSPGKNKSGRGHMLIIRVPSVQLAMLAKERLQEVRDKLGLQYRFEIILGNPATELSVATHFVARLKSWRGNEPEEWIPRTYQDLDGLPCIVILTGKDPLGETFPRSLKYCDLRLIDSSYLTRTALEQEVGLACCYVSKEVIRGPTVALDLSGKEQERAAVSENDSDELLIDLERPQSNSSAVTGTSGSIMENGVSSSSTADKSQKQSLTPSFQSPATSLGLDEGVSASSAGAGAGETLKQECDSLGPQMASSTTSKPSSSSSGPRTLPWPGQPIRGCRGPQAALPPVVILSKAAYSLLGSQKSGKLPSSSSLLPHADVAWVSSLRPLLNKDMSSEEQSLYYRQWTLARQHHADYSNQLDPASGTRNFHPRRLLLTGPPQVGKTGSYLQFLRILFRMLIRLLEVDVYDEEEINTDHNESSEVSQSEGEPWPDIESFSKMPFDVSVHDPKYSLMSLVYTEKLAGVKQEVIKESKVEEPRKRETVSIMLTKYAAYNTFHHCEQCRQYMDFTSASQMSDSTLHAFTFSSSMLGEEVQLYFIIPKSKESHFVFSKQGKHLESMRLPLVSDKNLNAVKSPIFTPSSGRHEHGLLNLFHAMEGISHLHLLVVKEYEMPLYRKYWPNHIMLVLPGMFNNAGVGAARFLIKELSYHNLELERNRLEELGIKRQCVWPFIVMMDDSCVLWNIHSVQEPSSQPMEVGVSSKNVSLKTVLQHIEATPKIVHYAILGIQKWSSKLTSQSLKAPFSRCHVHDFILLNTDLTQNVQYDFNRYFCEDADFNLRTNSSGLLICRFNNFSLMKKHVQVGGQRDFIIKPKIMVSESLAPILPLQYICAPDSEHTLLAAPAQFLLEKFLQHASYKLFPKAIHNFRSPVLAIDCYLNIGPEVAICYISSRPHSSNVNCEGVFFSGLLLYLCDSFVGADLKKFKFLKGATLCVICQDRSSLRQTIVRLELEDEWQFRLRDEFQTANSSDDKPLYFLTGRHV.

The span at 87-96 (EDDEDDEEMS) shows a compositional bias: acidic residues. Disordered regions lie at residues 87–111 (EDDE…KPAP), 246–326 (SCHS…GPPK), and 1101–1222 (RAAV…RGCR). Over residues 252 to 262 (PSSSVSSTVTP) the composition is skewed to low complexity. Polar residues-rich tracts occupy residues 263–278 (ENGT…TQTD), 296–307 (TPAHTGNYSLSP), and 1119–1161 (PQSN…SPAT). A compositionally biased stretch (low complexity) spans 1195 to 1206 (SSTTSKPSSSSS). Residues 1843–1862 (GVFFSGLLLYLCDSFVGADL) form a helical membrane-spanning segment.

It belongs to the GREB1 family. Widely expressed, with prominent expression in the cochlea. Expressed at high levels in fetal kidney. In adult tissues, highest levels in vagina, cervix and epididymis.

It is found in the membrane. Functionally, plays a major role in early metanephros and genital development. The polypeptide is GREB1-like protein (GREB1L) (Homo sapiens (Human)).